Here is a 289-residue protein sequence, read N- to C-terminus: MYG1 protein TC_0665 (289 aa).

Belongs to the MYG1 family.

This Chlamydia muridarum (strain MoPn / Nigg) protein is MYG1 protein TC_0665.